The sequence spans 662 residues: Transketolase (662 aa).

Residue H28 coordinates substrate. Residues H68 and 115–117 (GPL) contribute to the thiamine diphosphate site. D156 is a Mg(2+) binding site. G157 and N186 together coordinate thiamine diphosphate. Residues N186 and I188 each coordinate Mg(2+). Substrate-binding residues include H261, R356, and S383. H261 provides a ligand contact to thiamine diphosphate. The active-site Proton donor is the E410. F436 is a thiamine diphosphate binding site. Substrate is bound by residues H460, D468, and R519.

The protein belongs to the transketolase family. Homodimer. Requires Mg(2+) as cofactor. Ca(2+) is required as a cofactor. Mn(2+) serves as cofactor. It depends on Co(2+) as a cofactor. The cofactor is thiamine diphosphate.

The enzyme catalyses D-sedoheptulose 7-phosphate + D-glyceraldehyde 3-phosphate = aldehydo-D-ribose 5-phosphate + D-xylulose 5-phosphate. It participates in carbohydrate biosynthesis; Calvin cycle. Its pathway is carbohydrate degradation; pentose phosphate pathway. Catalyzes the transfer of a two-carbon ketol group from a ketose donor to an aldose acceptor, via a covalent intermediate with the cofactor thiamine pyrophosphate. The chain is Transketolase (tkt) from Staphylococcus epidermidis (strain ATCC 12228 / FDA PCI 1200).